The primary structure comprises 200 residues: NAD(P)H dehydrogenase (quinone) (200 aa).

The region spanning 4-191 (VLVLYYSSYG…DIARYQGKHV (188 aa)) is the Flavodoxin-like domain. Residues 10–15 (SSYGHV) and 79–81 (TRF) contribute to the FMN site. Tyr-12 is a binding site for NAD(+). Position 99 (Trp-99) interacts with substrate. Residues 114–120 (STGTQHG) and His-135 contribute to the FMN site.

This sequence belongs to the WrbA family. It depends on FMN as a cofactor.

The enzyme catalyses a quinone + NADH + H(+) = a quinol + NAD(+). It catalyses the reaction a quinone + NADPH + H(+) = a quinol + NADP(+). This is NAD(P)H dehydrogenase (quinone) from Burkholderia ambifaria (strain MC40-6).